Here is a 514-residue protein sequence, read N- to C-terminus: Cytochrome P450 monooxygenase MO6277 (514 aa).

A helical membrane pass occupies residues 6–26 (LTVLALLGGTLLLYCSGLVIY). Cys457 is a heme binding site.

It belongs to the cytochrome P450 family. The cofactor is heme.

It is found in the membrane. It carries out the reaction polyporic acid + reduced [NADPH--hemoprotein reductase] + O2 = ascocorynin + oxidized [NADPH--hemoprotein reductase] + H2O + H(+). It participates in secondary metabolite biosynthesis. Functionally, cytochrome P450 monooxygenase that hydroxylates polyporic acid produced by the nonribosomal peptide synthetase acyN to produce the less toxic metabolite ascocorynin. The hydrophobic substrate polyporic acid might approach the active site from the membrane and, after hydroxylation into ascocorynin, leaves into the cytoplasm. MO6277 appears vital to avoid high-level accumulation of polyporic acid in the fungal membrane. This Ascocoryne sarcoides (Purple jellydisc fungus) protein is Cytochrome P450 monooxygenase MO6277.